The chain runs to 301 residues: DNA repair protein RecO (301 aa).

The tract at residues 272-301 (PTPSGQGSPVAAAAFSEEDSETLGSNLKKL) is disordered.

Belongs to the RecO family.

Involved in DNA repair and RecF pathway recombination. The sequence is that of DNA repair protein RecO from Synechococcus sp. (strain JA-3-3Ab) (Cyanobacteria bacterium Yellowstone A-Prime).